Here is a 677-residue protein sequence, read N- to C-terminus: O-fucosyltransferase 27 (677 aa).

The chain crosses the membrane as a helical; Signal-anchor for type II membrane protein span at residues 15–35; the sequence is WIGLLGLVLSAFSLLVHFLLA. N-linked (GlcNAc...) asparagine glycosylation is present at asparagine 130. Residues 410–437 are disordered; the sequence is PPSIEVETKHDSLKSTRQRPQPLPPPPA. N-linked (GlcNAc...) asparagine glycosylation is found at asparagine 542 and asparagine 592. A disordered region spans residues 619–677; it reads NAEKEEDLDEEDLSSSGLFFGHKESGGNNNGNNETVNSEANNKEEGQLEDQEELEGSER. Residues 622-631 show a composition bias toward acidic residues; the sequence is KEEDLDEEDL. Over residues 644-658 the composition is skewed to low complexity; the sequence is GGNNNGNNETVNSEA. Asparagine 651 carries an N-linked (GlcNAc...) asparagine glycan. Residues 665–677 are compositionally biased toward acidic residues; that stretch reads QLEDQEELEGSER.

This sequence belongs to the glycosyltransferase GT106 family.

It localises to the membrane. It participates in glycan metabolism. The protein is O-fucosyltransferase 27 of Arabidopsis thaliana (Mouse-ear cress).